The sequence spans 230 residues: ATP synthase subunit a (230 aa).

The next 5 helical transmembrane spans lie at 17–37 (LPITQSVLTTWFIMISLFIMA), 78–98 (IFPFVATLWIFILVSNLIGVI), 107–127 (DLSVTASLAIMTFLSVHWFGI), 165–187 (LFGNIMSLQLTALIVLMIAGFLV), and 198–218 (EAIIQAYIFGMLALIYIAGGI).

This sequence belongs to the ATPase A chain family. F-type ATPases have 2 components, CF(1) - the catalytic core - and CF(0) - the membrane proton channel. CF(1) has five subunits: alpha(3), beta(3), gamma(1), delta(1), epsilon(1). CF(0) has three main subunits: a(1), b(2) and c(9-12). The alpha and beta chains form an alternating ring which encloses part of the gamma chain. CF(1) is attached to CF(0) by a central stalk formed by the gamma and epsilon chains, while a peripheral stalk is formed by the delta and b chains.

The protein localises to the cell inner membrane. Its function is as follows. Key component of the proton channel; it plays a direct role in the translocation of protons across the membrane. In Legionella pneumophila subsp. pneumophila (strain Philadelphia 1 / ATCC 33152 / DSM 7513), this protein is ATP synthase subunit a.